The chain runs to 184 residues: GMP synthase [glutamine-hydrolyzing] subunit A (184 aa).

The Glutamine amidotransferase type-1 domain maps to 3–184 (HIAVIDNHGQ…VFKNFIARCQ (182 aa)). The Nucleophile role is filled by C75. Residues H163 and E165 contribute to the active site.

In terms of assembly, heterodimer composed of a glutamine amidotransferase subunit (A) and a GMP-binding subunit (B).

It catalyses the reaction XMP + L-glutamine + ATP + H2O = GMP + L-glutamate + AMP + diphosphate + 2 H(+). Its pathway is purine metabolism; GMP biosynthesis; GMP from XMP (L-Gln route): step 1/1. Its function is as follows. Catalyzes the synthesis of GMP from XMP. This chain is GMP synthase [glutamine-hydrolyzing] subunit A, found in Haloquadratum walsbyi (strain DSM 16790 / HBSQ001).